A 279-amino-acid chain; its full sequence is Release factor glutamine methyltransferase (279 aa).

S-adenosyl-L-methionine-binding residues include aspartate 139 and asparagine 182. 182–185 (NPPY) is a substrate binding site.

It belongs to the protein N5-glutamine methyltransferase family. PrmC subfamily.

It carries out the reaction L-glutaminyl-[peptide chain release factor] + S-adenosyl-L-methionine = N(5)-methyl-L-glutaminyl-[peptide chain release factor] + S-adenosyl-L-homocysteine + H(+). Functionally, methylates the class 1 translation termination release factors RF1/PrfA and RF2/PrfB on the glutamine residue of the universally conserved GGQ motif. This chain is Release factor glutamine methyltransferase, found in Thermodesulfovibrio yellowstonii (strain ATCC 51303 / DSM 11347 / YP87).